The chain runs to 412 residues: Clamp protein VP6 (412 aa).

Belongs to the reoviridae clamp protein family. As to quaternary structure, interacts with capsid proteins VP3, VP5 and VP7.

The protein localises to the virion. In terms of biological role, located at the interface of the incomplete T=13 outer capsid and the pseudo T=2 inner capsid, 120 VP6 subunits clamp and stabilizes the inner capsid shell. This Aquareovirus C (isolate Golden shiner/USA/GSRV/1977) (AQRV-C) protein is Clamp protein VP6 (S8).